The following is a 48-amino-acid chain: Keratin-associated protein 22-1 (48 aa).

In terms of assembly, interacts with hair keratins.

In terms of biological role, in the hair cortex, hair keratin intermediate filaments are embedded in an interfilamentous matrix, consisting of hair keratin-associated proteins (KRTAP), which are essential for the formation of a rigid and resistant hair shaft through their extensive disulfide bond cross-linking with abundant cysteine residues of hair keratins. The matrix proteins include the high-sulfur and high-glycine-tyrosine keratins. The sequence is that of Keratin-associated protein 22-1 (KRTAP22-1) from Homo sapiens (Human).